Reading from the N-terminus, the 677-residue chain is Probable potassium transport system protein Kup (677 aa).

The next 12 helical transmembrane spans lie at 13–33 (GALIAIGIVFGDIGTSPLYTM), 54–74 (VSLVFWTLMLITTIKYVIIAL), 98–118 (WLLLPALIGGAALLADGTLTP), 137–157 (FIFPNNQTIVLFVVTVILLIV), 171–191 (IFGPVMLTWFLFIGFFGLVNI), 217–237 (TGIFILGSVFLATTGAEALYS), 249–269 (VSWIFVYTMLILNYMGQGAWI), 296–316 (IFGVVMAALAAIIASQALISG), 345–365 (MYIGTVNWLLCIIGLIIVWAF), 374–394 (AYGLSITITMLMTTLLLYQFI), 402–422 (ILAFFFVVIFGMIETVFLIAS), and 429–449 (GGYATLIIMVAILSVMMIWFY).

It belongs to the HAK/KUP transporter (TC 2.A.72) family.

It is found in the cell membrane. It catalyses the reaction K(+)(in) + H(+)(in) = K(+)(out) + H(+)(out). Transport of potassium into the cell. Likely operates as a K(+):H(+) symporter. The sequence is that of Probable potassium transport system protein Kup from Leuconostoc mesenteroides subsp. mesenteroides (strain ATCC 8293 / DSM 20343 / BCRC 11652 / CCM 1803 / JCM 6124 / NCDO 523 / NBRC 100496 / NCIMB 8023 / NCTC 12954 / NRRL B-1118 / 37Y).